Reading from the N-terminus, the 408-residue chain is LysM domain-containing protein ARB_01488 (408 aa).

The first 17 residues, Met1–Ala17, serve as a signal peptide directing secretion. A LysM 1 domain is found at Ser42–Ala91. The tract at residues Ser98–Asp178 is disordered. Over residues Asp106–Pro116 the composition is skewed to pro residues. 2 LysM domains span residues Gln270 to Val320 and Ser360 to Val406.

It localises to the secreted. Functionally, might have a role in sequestration of chitin oligosaccharides (breakdown products of fungal cell walls that are released during invasion and act as triggers of host immunity) to dampen host defense. The polypeptide is LysM domain-containing protein ARB_01488 (Arthroderma benhamiae (strain ATCC MYA-4681 / CBS 112371) (Trichophyton mentagrophytes)).